Here is a 1213-residue protein sequence, read N- to C-terminus: DNA-directed RNA polymerase subunit beta' (1213 aa).

Zn(2+) contacts are provided by cysteine 60, cysteine 62, cysteine 75, and cysteine 78. Mg(2+) contacts are provided by aspartate 450, aspartate 452, and aspartate 454. Residues cysteine 819, cysteine 893, cysteine 900, and cysteine 903 each contribute to the Zn(2+) site.

This sequence belongs to the RNA polymerase beta' chain family. In terms of assembly, the RNAP catalytic core consists of 2 alpha, 1 beta, 1 beta' and 1 omega subunit. When a sigma factor is associated with the core the holoenzyme is formed, which can initiate transcription. The cofactor is Mg(2+). Zn(2+) serves as cofactor.

It catalyses the reaction RNA(n) + a ribonucleoside 5'-triphosphate = RNA(n+1) + diphosphate. In terms of biological role, DNA-dependent RNA polymerase catalyzes the transcription of DNA into RNA using the four ribonucleoside triphosphates as substrates. In Streptococcus pyogenes serotype M6 (strain ATCC BAA-946 / MGAS10394), this protein is DNA-directed RNA polymerase subunit beta'.